Reading from the N-terminus, the 601-residue chain is Tripeptidyl-peptidase SED4 (601 aa).

Residues M1 to A22 form the signal peptide. Positions A23 to T202 are cleaved as a propeptide — removed in mature form. N-linked (GlcNAc...) asparagine glycans are attached at residues N210 and N281. Positions T212–Y601 constitute a Peptidase S53 domain. Residues E288 and D292 each act as charge relay system in the active site. N323 carries an N-linked (GlcNAc...) asparagine glycan. S504 functions as the Charge relay system in the catalytic mechanism. Residues D546 and I547 each coordinate Ca(2+). N575 is a glycosylation site (N-linked (GlcNAc...) asparagine). Residues G579 and D581 each coordinate Ca(2+).

Requires Ca(2+) as cofactor.

It localises to the secreted. Its subcellular location is the extracellular space. The catalysed reaction is Release of an N-terminal tripeptide from a polypeptide.. Its function is as follows. Secreted tripeptidyl-peptidase which degrades proteins at acidic pHs and is involved in virulence. The polypeptide is Tripeptidyl-peptidase SED4 (SED4) (Arthroderma otae (strain ATCC MYA-4605 / CBS 113480) (Microsporum canis)).